A 468-amino-acid polypeptide reads, in one-letter code: UDP-N-acetylmuramoyl-L-alanine--L-glutamate ligase (468 aa).

Residue 122 to 128 coordinates ATP; that stretch reads GTKGKST.

Belongs to the MurCDEF family. MurD2 subfamily.

Its subcellular location is the cytoplasm. The enzyme catalyses UDP-N-acetyl-alpha-D-muramoyl-L-alanine + L-glutamate + ATP = UDP-N-acetyl-alpha-D-muramoyl-L-alanyl-L-glutamate + ADP + phosphate + H(+). The protein operates within cell wall biogenesis; peptidoglycan biosynthesis. Functionally, cell wall formation. Catalyzes the addition of L-glutamate to the nucleotide precursor UDP-N-acetylmuramoyl-L-alanine. This Xylella fastidiosa (strain Temecula1 / ATCC 700964) protein is UDP-N-acetylmuramoyl-L-alanine--L-glutamate ligase.